The sequence spans 37 residues: Large ribosomal subunit protein bL36 (37 aa).

Belongs to the bacterial ribosomal protein bL36 family.

The protein is Large ribosomal subunit protein bL36 of Sulfurovum sp. (strain NBC37-1).